The chain runs to 102 residues: Class I hydrophobin 1 (102 aa).

The signal sequence occupies residues 1 to 18; it reads MSLFKILVAAATVATALA. 4 disulfides stabilise this stretch: Cys37/Cys84, Cys45/Cys78, Cys46/Cys63, and Cys85/Cys97.

Belongs to the fungal hydrophobin family.

The protein resides in the secreted. Its subcellular location is the cell wall. In terms of biological role, aerial growth, conidiation, and dispersal of filamentous fungi in the environment rely upon a capability of their secreting small amphipathic proteins called hydrophobins (HPBs) with low sequence identity. Class I can self-assemble into an outermost layer of rodlet bundles on aerial cell surfaces, conferring cellular hydrophobicity that supports fungal growth, development and dispersal; whereas Class II form highly ordered films at water-air interfaces through intermolecular interactions but contribute nothing to the rodlet structure. Hyd1 is essential for stress tolerance, conidial hydrophobicity, adhesion to insect cuticle, and insect infectivity/pathogenicity. Plays a neglectable role in hyphal growth and asexual development. The chain is Class I hydrophobin 1 from Metarhizium robertsii (strain ARSEF 23 / ATCC MYA-3075) (Metarhizium anisopliae (strain ARSEF 23)).